The primary structure comprises 539 residues: Chaperonin GroEL (539 aa).

Residues 30–33 (TLGP), 87–91 (DGTTT), glycine 414, 479–481 (DAL), and aspartate 495 contribute to the ATP site.

Belongs to the chaperonin (HSP60) family. Forms a cylinder of 14 subunits composed of two heptameric rings stacked back-to-back. Interacts with the co-chaperonin GroES.

The protein localises to the cytoplasm. The enzyme catalyses ATP + H2O + a folded polypeptide = ADP + phosphate + an unfolded polypeptide.. In terms of biological role, together with its co-chaperonin GroES, plays an essential role in assisting protein folding. The GroEL-GroES system forms a nano-cage that allows encapsulation of the non-native substrate proteins and provides a physical environment optimized to promote and accelerate protein folding. The chain is Chaperonin GroEL from Caldicellulosiruptor saccharolyticus (strain ATCC 43494 / DSM 8903 / Tp8T 6331).